A 467-amino-acid chain; its full sequence is ATP-dependent rRNA helicase rrp3 (467 aa).

Residues 1 to 48 (MPGVKKRKVAREAPAPAPAQESDVESSTPEQTQEPEAQEQEQEEGQSK) are disordered. A Q motif motif is present at residues 48-76 (KTFKELGIIEQLCEACETMGYKAPTPIQR). Residues 79-250 (IPLALKGRDL…RASLSNPLRV (172 aa)) enclose the Helicase ATP-binding domain. Residue 92–99 (AETGSGKT) coordinates ATP. A DEAD box motif is present at residues 198–201 (DEAD). The Helicase C-terminal domain maps to 262–422 (TLLQSYLFIP…EYDCPKDEVM (161 aa)). A disordered region spans residues 439–467 (MKDYNEKKGSRGKKFGGKRSRDEMDQEEG).

It belongs to the DEAD box helicase family. DDX47/RRP3 subfamily. In terms of assembly, interacts with the SSU processome.

The protein resides in the nucleus. It carries out the reaction ATP + H2O = ADP + phosphate + H(+). ATP-dependent rRNA helicase required for pre-ribosomal RNA processing. Involved in the maturation of the 35S-pre-rRNA and to its cleavage to mature 18S rRNA. This Aspergillus niger (strain ATCC MYA-4892 / CBS 513.88 / FGSC A1513) protein is ATP-dependent rRNA helicase rrp3.